A 307-amino-acid polypeptide reads, in one-letter code: Nucleotide-binding protein AAur_2084 (307 aa).

The interval 1 to 21 is disordered; it reads MDEATAKSGTEQDGLTPVKPP. 30–37 is an ATP binding site; that stretch reads GMSGAGRS. 81–84 contacts GTP; it reads DVRS.

The protein belongs to the RapZ-like family.

Its function is as follows. Displays ATPase and GTPase activities. The chain is Nucleotide-binding protein AAur_2084 from Paenarthrobacter aurescens (strain TC1).